The sequence spans 335 residues: Pyridoxal 5'-phosphate synthase subunit PdxS (335 aa).

D30 is a D-ribose 5-phosphate binding site. K87 functions as the Schiff-base intermediate with D-ribose 5-phosphate in the catalytic mechanism. Position 159 (G159) interacts with D-ribose 5-phosphate. D-glyceraldehyde 3-phosphate is bound at residue R171. D-ribose 5-phosphate is bound by residues G257 and 278-279 (GS).

Belongs to the PdxS/SNZ family. In the presence of PdxT, forms a dodecamer of heterodimers.

The catalysed reaction is aldehydo-D-ribose 5-phosphate + D-glyceraldehyde 3-phosphate + L-glutamine = pyridoxal 5'-phosphate + L-glutamate + phosphate + 3 H2O + H(+). It functions in the pathway cofactor biosynthesis; pyridoxal 5'-phosphate biosynthesis. Its function is as follows. Catalyzes the formation of pyridoxal 5'-phosphate from ribose 5-phosphate (RBP), glyceraldehyde 3-phosphate (G3P) and ammonia. The ammonia is provided by the PdxT subunit. Can also use ribulose 5-phosphate and dihydroxyacetone phosphate as substrates, resulting from enzyme-catalyzed isomerization of RBP and G3P, respectively. This Thermococcus gammatolerans (strain DSM 15229 / JCM 11827 / EJ3) protein is Pyridoxal 5'-phosphate synthase subunit PdxS.